Reading from the N-terminus, the 242-residue chain is Galectin-3 (242 aa).

The segment at 1–35 (MADGFSLNDALSGSGHPPNQGWPGPWGNQPAGPGG) is disordered. N-acetylalanine is present on Ala-2. Ser-6 carries the post-translational modification Phosphoserine; by CK1. Ser-12 bears the Phosphoserine mark. The span at 17 to 31 (PPNQGWPGPWGNQPA) shows a compositional bias: low complexity. Tandem repeats lie at residues 35–43 (GYPGAAYPG), 44–52 (AYPGHAPGA), 53–61 (YPGQAPPGP), and 62–70 (YPGPGAHGA). The tract at residues 35 to 98 (GYPGAAYPGA…GAGAYPGASP (64 aa)) is 7 X 9 AA tandem repeats of Y-P-G-X(3)-P-[GS]-A. The segment at 55–93 (GQAPPGPYPGPGAHGAYPGQPGGPGAYPSPGQPSGAGAY) is disordered. A 5; approximate repeat occupies 71 to 80 (YPGQPGGPGA). The segment covering 80-93 (AYPSPGQPSGAGAY) has biased composition (low complexity). A 6; approximate repeat occupies 81-92 (YPSPGQPSGAGA). Residues 93–98 (YPGASP) form a 7; truncated repeat. Residues 110 to 240 (YDLPLPGGVM…DIQLTSASHA (131 aa)) form the Galectin domain. 173 to 181 (WGREERQTT) is a binding site for a beta-D-galactoside. Positions 218–233 (RNLKEINKLGISGDIQ) match the Nuclear export signal motif.

In terms of assembly, probably forms homo- or heterodimers. Interacts with DMBT1. Interacts with CD6 and ALCAM. Forms a complex with the ITGA3, ITGB1 and CSPG4. Interacts with LGALS3BP, LYPD3, ZFTRAF1 and UACA. Interacts with TRIM16; this interaction mediates autophagy of damage endomembranes. Interacts with cargo receptor TMED10; the interaction mediates the translocation from the cytoplasm into the ERGIC (endoplasmic reticulum-Golgi intermediate compartment) and thereby secretion. Interacts with and inhibits by binding NCR3/NKp30.

The protein resides in the cytoplasm. It localises to the nucleus. It is found in the secreted. Galactose-specific lectin which binds IgE. May mediate with the alpha-3, beta-1 integrin the stimulation by CSPG4 of endothelial cells migration. Together with DMBT1, required for terminal differentiation of columnar epithelial cells during early embryogenesis. In the nucleus: acts as a pre-mRNA splicing factor. Involved in acute inflammatory responses including neutrophil activation and adhesion, chemoattraction of monocytes macrophages, opsonization of apoptotic neutrophils, and activation of mast cells. Together with TRIM16, coordinates the recognition of membrane damage with mobilization of the core autophagy regulators ATG16L1 and BECN1 in response to damaged endomembranes. When secreted, interacts with NK cell-activating receptor NCR3/NKp30 acting as an inhibitory ligand which antagonizes NK cell attack. In Oryctolagus cuniculus (Rabbit), this protein is Galectin-3 (LGALS3).